The following is a 223-amino-acid chain: Ribonuclease T (223 aa).

Residues 1-11 (MSDDHFDDEQE) show a composition bias toward acidic residues. Residues 1 to 21 (MSDDHFDDEQEGSSGGPRHPM) form a disordered region. Residues 31–205 (VVVDVETGGF…YDTEKTAELF (175 aa)) enclose the Exonuclease domain. Positions 34, 36, 192, and 197 each coordinate Mg(2+). His192 acts as the Proton donor/acceptor in catalysis.

This sequence belongs to the RNase T family. Homodimer. Mg(2+) is required as a cofactor.

Trims short 3' overhangs of a variety of RNA species, leaving a one or two nucleotide 3' overhang. Responsible for the end-turnover of tRNA: specifically removes the terminal AMP residue from uncharged tRNA (tRNA-C-C-A). Also appears to be involved in tRNA biosynthesis. The sequence is that of Ribonuclease T from Pseudomonas fluorescens (strain ATCC BAA-477 / NRRL B-23932 / Pf-5).